Reading from the N-terminus, the 431-residue chain is O-Mevalon transferase macI (431 aa).

Asn-176 carries N-linked (GlcNAc...) asparagine glycosylation. A run of 4 helical transmembrane segments spans residues 198–218 (IYALIVCGFAITIYSHFAILM), 301–321 (LLMMSFVISGLIHACGTYQVT), 336–356 (YFALQGMAIIAEDFGCWVLGI), and 404–424 (LFAALELVRVSAVAVPGNFVA).

This sequence belongs to the wax synthase family.

The protein localises to the membrane. It functions in the pathway secondary metabolite biosynthesis; terpenoid biosynthesis. Its function is as follows. O-Mevalon transferase; part of the gene cluster that mediates the biosynthesis of macrophorins, isoprenoid epoxycyclohexenones containing cyclized drimane moieties. The first step of the pathway is the synthesis of 6-methylsalicylic acid (6-MSA) by the polyketide synthase macA. 6-MSA is then converted to m-cresol by the decarboxylase macB. The cytochrome P450 monooxygenase macC then catalyzes the oxidation of m-cresol to toluquinol. Epoxidation of toluquinol is then performed by the short chain dehydrogenase macD, with the help of macE, and a further prenylation by macG leads to 7-deacetoxyyanuthone A. The next step is the hydroxylation of C-22 of 7-deacetoxyyanuthone A by the cytochrome P450 monooxygenase macH to yield 22-deacetylyanuthone A. O-Mevalon transferase macI then attaches mevalon to the hydroxyl group of 22-deacetylyanuthone A to produce yanuthone E. The terpene cyclase macJ catalyzes the cyclization of 22-deacetylyanuthone A to macrophorin A. MacJ is also able to catalyze cyclization of yanuthone E and 7-deacetoxyyanuthone A to their corresponding macrophorins. The macJ products can be further modified by macH and macJ, as well as by the FAD-dependent monooxygenase macF, to produce additional macrophorins, including 4'-oxomacrophorin A, 4'-oxomacrophorin D and 4'-oxomacrophorin E. This chain is O-Mevalon transferase macI, found in Penicillium terrestre.